A 248-amino-acid chain; its full sequence is Meiotically up-regulated gene 65 protein (248 aa).

Its function is as follows. Has a role in meiosis. The polypeptide is Meiotically up-regulated gene 65 protein (mug65) (Schizosaccharomyces pombe (strain 972 / ATCC 24843) (Fission yeast)).